The sequence spans 207 residues: MNAMVLDDVIKSQAGYLNPYILEERQLNVTQLDVFSRLMMDRIIFLGTQIDDYTANTLQAQLLYLDSVDPGKDISIYINSPGGSVYAGLGIYDTMQFISSDVATICTGMAASMASVLLVAGAKGKRSALPHSRVMIHQPMGGAQGQASDIEITAREIQKLKKELYTIIADHSGTSFDKVWADSDRDYWMTAQEAKEYGMIDEVLIKK.

Serine 112 functions as the Nucleophile in the catalytic mechanism. Residue histidine 137 is part of the active site.

This sequence belongs to the peptidase S14 family. Fourteen ClpP subunits assemble into 2 heptameric rings which stack back to back to give a disk-like structure with a central cavity, resembling the structure of eukaryotic proteasomes.

It is found in the cytoplasm. It catalyses the reaction Hydrolysis of proteins to small peptides in the presence of ATP and magnesium. alpha-casein is the usual test substrate. In the absence of ATP, only oligopeptides shorter than five residues are hydrolyzed (such as succinyl-Leu-Tyr-|-NHMec, and Leu-Tyr-Leu-|-Tyr-Trp, in which cleavage of the -Tyr-|-Leu- and -Tyr-|-Trp bonds also occurs).. Cleaves peptides in various proteins in a process that requires ATP hydrolysis. Has a chymotrypsin-like activity. Plays a major role in the degradation of misfolded proteins. The chain is ATP-dependent Clp protease proteolytic subunit from Bacteroides fragilis (strain ATCC 25285 / DSM 2151 / CCUG 4856 / JCM 11019 / LMG 10263 / NCTC 9343 / Onslow / VPI 2553 / EN-2).